The primary structure comprises 92 residues: Small ribosomal subunit protein uS19 (92 aa).

Belongs to the universal ribosomal protein uS19 family.

Protein S19 forms a complex with S13 that binds strongly to the 16S ribosomal RNA. The sequence is that of Small ribosomal subunit protein uS19 from Methylobacterium sp. (strain 4-46).